Here is a 330-residue protein sequence, read N- to C-terminus: 5'-AMP-activated protein kinase subunit gamma-1 (330 aa).

Residues 1-13 (METVTSSDSSSAV) show a composition bias toward polar residues. Residues 1–26 (METVTSSDSSSAVENEHPQDTPESNN) form a disordered region. CBS domains follow at residues 43 to 103 (PTSS…KSAL), 125 to 187 (SFKP…PKPE), and 198 to 260 (IGTY…NLDV). Residues Arg70, 85–90 (MLTITD), Val130, 151–152 (HR), and Lys170 each bind ADP. AMP contacts are provided by residues Arg70, 85 to 90 (MLTITD), Val130, His151, 151 to 152 (HR), Lys170, Thr200, Ala205, 226 to 227 (SA), and 242 to 245 (SKFD). ATP contacts are provided by residues Arg70, 85-90 (MLTITD), Val130, 151-152 (HR), Arg152, and Lys170. Positions 138–159 (LFDAVSSLIRNKIHRLPVIDPE) match the AMPK pseudosubstrate motif. Residue 242–245 (SKFD) participates in ADP binding. 242-245 (SKFD) lines the ATP pocket. Position 261 is a phosphoserine; by ULK1 (Ser261). Residue Thr263 is modified to Phosphothreonine; by ULK1. Arg269 lines the ADP pocket. Residue Arg269 coordinates AMP. Arg269 provides a ligand contact to ATP. Ser270 bears the Phosphoserine; by ULK1 mark. A CBS 4 domain is found at 272–329 (YFEGVLKCYLHETLETIINRLVEAEVHRLVVVDENDVVKGIVSLSDILQALVLTGGEK). ADP is bound by residues Leu277 and 298-299 (HR). AMP-binding positions include Leu277, His298, 298 to 299 (HR), and 314 to 317 (SLSD). Residues Leu277 and 298-299 (HR) each bind ATP.

This sequence belongs to the 5'-AMP-activated protein kinase gamma subunit family. AMPK is a heterotrimer of an alpha catalytic subunit (PRKAA1 or PRKAA2), a beta (PRKAB1 or PRKAB2) and a gamma non-catalytic subunits (PRKAG1, PRKAG2 or PRKAG3). Interacts with FNIP1 and FNIP2. Post-translationally, phosphorylated by ULK1 and ULK2; leading to negatively regulate AMPK activity and suggesting the existence of a regulatory feedback loop between ULK1, ULK2 and AMPK. Glycosylated; O-GlcNAcylated by OGT, promoting the AMP-activated protein kinase (AMPK) activity.

AMP/ATP-binding subunit of AMP-activated protein kinase (AMPK), an energy sensor protein kinase that plays a key role in regulating cellular energy metabolism. In response to reduction of intracellular ATP levels, AMPK activates energy-producing pathways and inhibits energy-consuming processes: inhibits protein, carbohydrate and lipid biosynthesis, as well as cell growth and proliferation. AMPK acts via direct phosphorylation of metabolic enzymes, and by longer-term effects via phosphorylation of transcription regulators. Also acts as a regulator of cellular polarity by remodeling the actin cytoskeleton; probably by indirectly activating myosin. Gamma non-catalytic subunit mediates binding to AMP, ADP and ATP, leading to activate or inhibit AMPK: AMP-binding results in allosteric activation of alpha catalytic subunit (PRKAA1 or PRKAA2) both by inducing phosphorylation and preventing dephosphorylation of catalytic subunits. ADP also stimulates phosphorylation, without stimulating already phosphorylated catalytic subunit. ATP promotes dephosphorylation of catalytic subunit, rendering the AMPK enzyme inactive. The sequence is that of 5'-AMP-activated protein kinase subunit gamma-1 (PRKAG1) from Sus scrofa (Pig).